Consider the following 208-residue polypeptide: MIRYCLTSYREDLVILDIINDSFSIVPDAGSLLKERDKLLKEFPQLSYFFDSEYHIGSVSRNSDTSFLEERWFLPEPDKTLYKCSLFKRFILLLKVFYYSWNIEKKGMAWIFISNKKENRLYSLNEEHLIRKEISNLSIIFHLNIFKSDCLTYSYALKRILNSRNIDAHLVIGVRTQPFYSHSWVEVGGQVINDAPNMRDKLSVIAEI.

It localises to the cytoplasm. Along with McjC, necessary and sufficient to process the inactive microcin J25 (McjA) precursor into the active peptide. The sequence is that of Microcin J25-processing protein McjB (mcjB) from Escherichia coli.